We begin with the raw amino-acid sequence, 170 residues long: Ribosome maturation factor RimM (170 aa).

Positions 97 to 170 constitute a PRC barrel domain; sequence NADEYYWVDL…LVVVDWDPEF (74 aa).

It belongs to the RimM family. As to quaternary structure, binds ribosomal protein uS19.

It is found in the cytoplasm. An accessory protein needed during the final step in the assembly of 30S ribosomal subunit, possibly for assembly of the head region. Essential for efficient processing of 16S rRNA. May be needed both before and after RbfA during the maturation of 16S rRNA. It has affinity for free ribosomal 30S subunits but not for 70S ribosomes. This Stenotrophomonas maltophilia (strain R551-3) protein is Ribosome maturation factor RimM.